Here is a 250-residue protein sequence, read N- to C-terminus: Zinc finger protein lsy-27 (250 aa).

C2H2-type zinc fingers lie at residues F25 to H48 and H52 to H75. The C2H2-type 3; degenerate zinc-finger motif lies at F81–Q104. Disordered regions lie at residues I126–R177 and Q226–E250. The span at S148 to S165 shows a compositional bias: low complexity. Residues M239–E250 are compositionally biased toward basic and acidic residues.

In terms of biological role, involved in regulating left/right asymmetric differentiation of the gustatory ASE neurons. Plays a role in modulating expression of LIM/homeobox protein lim-6. This chain is Zinc finger protein lsy-27, found in Caenorhabditis elegans.